We begin with the raw amino-acid sequence, 210 residues long: NADH dehydrogenase [ubiquinone] iron-sulfur protein 8, mitochondrial (210 aa).

The N-terminal 34 residues, 1 to 34 (MRCLTTPVLLRALAQAARAGPPGGRSLHSSAVAA), are a transit peptide targeting the mitochondrion. 4Fe-4S ferredoxin-type domains lie at 102–131 (RRYP…IEAE) and 141–170 (TRYD…EGPN). Cys-111, Cys-114, Cys-117, Cys-121, Cys-150, Cys-153, Cys-156, and Cys-160 together coordinate [4Fe-4S] cluster.

This sequence belongs to the complex I 23 kDa subunit family. Core subunit of respiratory chain NADH dehydrogenase (Complex I) which is composed of 45 different subunits. This is a component of the iron-sulfur (IP) fragment of the enzyme. Interacts with RAB5IF. [4Fe-4S] cluster serves as cofactor.

Its subcellular location is the mitochondrion inner membrane. It carries out the reaction a ubiquinone + NADH + 5 H(+)(in) = a ubiquinol + NAD(+) + 4 H(+)(out). Core subunit of the mitochondrial membrane respiratory chain NADH dehydrogenase (Complex I) which catalyzes electron transfer from NADH through the respiratory chain, using ubiquinone as an electron acceptor. Essential for the catalytic activity and assembly of complex I. The polypeptide is NADH dehydrogenase [ubiquinone] iron-sulfur protein 8, mitochondrial (NDUFS8) (Gorilla gorilla gorilla (Western lowland gorilla)).